The following is a 361-amino-acid chain: Biotin synthase (361 aa).

The tract at residues alanine 14 to glycine 38 is disordered. Residues histidine 86–arginine 315 form the Radical SAM core domain. [4Fe-4S] cluster-binding residues include cysteine 104, cysteine 108, and cysteine 111. Residues cysteine 180 and cysteine 240 each contribute to the [2Fe-2S] cluster site.

This sequence belongs to the radical SAM superfamily. Biotin synthase family. As to quaternary structure, homodimer. It depends on [4Fe-4S] cluster as a cofactor. Requires [2Fe-2S] cluster as cofactor.

The enzyme catalyses (4R,5S)-dethiobiotin + (sulfur carrier)-SH + 2 reduced [2Fe-2S]-[ferredoxin] + 2 S-adenosyl-L-methionine = (sulfur carrier)-H + biotin + 2 5'-deoxyadenosine + 2 L-methionine + 2 oxidized [2Fe-2S]-[ferredoxin]. Its pathway is cofactor biosynthesis; biotin biosynthesis; biotin from 7,8-diaminononanoate: step 2/2. Its function is as follows. Catalyzes the conversion of dethiobiotin (DTB) to biotin by the insertion of a sulfur atom into dethiobiotin via a radical-based mechanism. The polypeptide is Biotin synthase (Nitratidesulfovibrio vulgaris (strain DP4) (Desulfovibrio vulgaris)).